A 232-amino-acid polypeptide reads, in one-letter code: 2-C-methyl-D-erythritol 4-phosphate cytidylyltransferase (232 aa).

This sequence belongs to the IspD/TarI cytidylyltransferase family. IspD subfamily.

It carries out the reaction 2-C-methyl-D-erythritol 4-phosphate + CTP + H(+) = 4-CDP-2-C-methyl-D-erythritol + diphosphate. It functions in the pathway isoprenoid biosynthesis; isopentenyl diphosphate biosynthesis via DXP pathway; isopentenyl diphosphate from 1-deoxy-D-xylulose 5-phosphate: step 2/6. Its function is as follows. Catalyzes the formation of 4-diphosphocytidyl-2-C-methyl-D-erythritol from CTP and 2-C-methyl-D-erythritol 4-phosphate (MEP). In Geobacter metallireducens (strain ATCC 53774 / DSM 7210 / GS-15), this protein is 2-C-methyl-D-erythritol 4-phosphate cytidylyltransferase.